We begin with the raw amino-acid sequence, 406 residues long: uncharacterized protein (406 aa).

10 helical membrane passes run 7–27, 43–63, 69–89, 98–118, 155–175, 220–240, 253–273, 297–317, 352–372, and 374–394; these read SILF…MVVI, VTLI…LITI, LTII…FYAL, LILV…FSPL, GLII…FLLF, IIIM…SVSL, WWGF…FIIY, LTLI…VLFM, VQFI…FLGV, and LVYV…FSQL.

Belongs to the major facilitator superfamily.

Its subcellular location is the cell membrane. This is an uncharacterized protein from Bacillus subtilis (strain 168).